The primary structure comprises 106 residues: Large ribosomal subunit protein P1 (106 aa).

Residues Ala69–Gly106 are disordered. A compositionally biased stretch (acidic residues) spans Lys83 to Ile98.

The protein belongs to the eukaryotic ribosomal protein P1/P2 family. In terms of assembly, part of the 50S ribosomal subunit. Homodimer, it forms part of the ribosomal stalk which helps the ribosome interact with GTP-bound translation factors. Forms a heptameric uL10/P0(P1)2(P1)2(P1)2 complex, where uL10/P0 forms an elongated spine to which the P1 dimers bind in a sequential fashion.

Its function is as follows. Forms part of the ribosomal stalk, playing a central role in the interaction of the ribosome with GTP-bound translation factors. This is Large ribosomal subunit protein P1 from Archaeoglobus fulgidus (strain ATCC 49558 / DSM 4304 / JCM 9628 / NBRC 100126 / VC-16).